We begin with the raw amino-acid sequence, 318 residues long: L-lactate dehydrogenase (318 aa).

Residues Val-18, Asp-39, Lys-44, Tyr-69, and 83 to 84 (GA) each bind NAD(+). Substrate contacts are provided by Gln-86 and Arg-92. NAD(+) contacts are provided by residues Ser-105, 122 to 124 (VSN), and Ser-147. 124-127 (NPVD) is a substrate binding site. Position 152 to 155 (152 to 155 (DTSR)) interacts with substrate. His-179 (proton acceptor) is an active-site residue. Residue Tyr-225 is modified to Phosphotyrosine. Residue Thr-234 coordinates substrate.

It belongs to the LDH/MDH superfamily. LDH family. As to quaternary structure, homotetramer.

Its subcellular location is the cytoplasm. The enzyme catalyses (S)-lactate + NAD(+) = pyruvate + NADH + H(+). It functions in the pathway fermentation; pyruvate fermentation to lactate; (S)-lactate from pyruvate: step 1/1. Catalyzes the conversion of lactate to pyruvate. The protein is L-lactate dehydrogenase of Clostridium botulinum (strain Langeland / NCTC 10281 / Type F).